A 209-amino-acid polypeptide reads, in one-letter code: ATP-dependent Clp protease proteolytic subunit 2 (209 aa).

Residue Ser106 is the Nucleophile of the active site. Residue His131 is part of the active site.

Belongs to the peptidase S14 family. In terms of assembly, fourteen ClpP subunits assemble into 2 heptameric rings which stack back to back to give a disk-like structure with a central cavity, resembling the structure of eukaryotic proteasomes.

The protein resides in the cytoplasm. It catalyses the reaction Hydrolysis of proteins to small peptides in the presence of ATP and magnesium. alpha-casein is the usual test substrate. In the absence of ATP, only oligopeptides shorter than five residues are hydrolyzed (such as succinyl-Leu-Tyr-|-NHMec, and Leu-Tyr-Leu-|-Tyr-Trp, in which cleavage of the -Tyr-|-Leu- and -Tyr-|-Trp bonds also occurs).. Cleaves peptides in various proteins in a process that requires ATP hydrolysis. Has a chymotrypsin-like activity. Plays a major role in the degradation of misfolded proteins. The sequence is that of ATP-dependent Clp protease proteolytic subunit 2 from Mesorhizobium japonicum (strain LMG 29417 / CECT 9101 / MAFF 303099) (Mesorhizobium loti (strain MAFF 303099)).